A 314-amino-acid chain; its full sequence is Deoxyhypusine hydroxylase (314 aa).

Met-1 carries the N-acetylmethionine modification. HEAT-like PBS-type repeat units lie at residues 61–87 (LAHE…VLND), 94–120 (VRHE…SLSS), 188–214 (ERYA…SLSA), 219–245 (LRHE…VLRD), and 252–278 (VRHE…FSKD). His-63, Glu-64, His-96, and Glu-97 together coordinate Fe cation. Fe cation contacts are provided by His-221, Glu-222, His-254, and Glu-255.

This sequence belongs to the deoxyhypusine hydroxylase family. Fe(2+) serves as cofactor.

It carries out the reaction [eIF5A protein]-deoxyhypusine + AH2 + O2 = [eIF5A protein]-hypusine + A + H2O. Its pathway is protein modification; eIF5A hypusination. In terms of biological role, catalyzes the hydroxylation of the N(6)-(4-aminobutyl)-L-lysine intermediate to form hypusine, an essential post-translational modification only found in mature eIF-5A factor. In Arabidopsis thaliana (Mouse-ear cress), this protein is Deoxyhypusine hydroxylase.